The sequence spans 359 residues: Phospho-N-acetylmuramoyl-pentapeptide-transferase (359 aa).

10 helical membrane passes run 3–23, 53–73, 84–104, 117–137, 156–176, 187–207, 231–251, 255–275, 283–303, and 330–350; these read QILF…PVLI, GGVA…LIGI, GLLV…DDFI, TAKL…ALQF, IATV…LVSA, LDGL…IITF, LALI…WNAA, IFMG…LSIT, VVIG…VAVF, and VIIR…ALFY.

This sequence belongs to the glycosyltransferase 4 family. MraY subfamily. Requires Mg(2+) as cofactor.

It is found in the cell membrane. The catalysed reaction is UDP-N-acetyl-alpha-D-muramoyl-L-alanyl-gamma-D-glutamyl-meso-2,6-diaminopimeloyl-D-alanyl-D-alanine + di-trans,octa-cis-undecaprenyl phosphate = di-trans,octa-cis-undecaprenyl diphospho-N-acetyl-alpha-D-muramoyl-L-alanyl-D-glutamyl-meso-2,6-diaminopimeloyl-D-alanyl-D-alanine + UMP. The protein operates within cell wall biogenesis; peptidoglycan biosynthesis. Functionally, catalyzes the initial step of the lipid cycle reactions in the biosynthesis of the cell wall peptidoglycan: transfers peptidoglycan precursor phospho-MurNAc-pentapeptide from UDP-MurNAc-pentapeptide onto the lipid carrier undecaprenyl phosphate, yielding undecaprenyl-pyrophosphoryl-MurNAc-pentapeptide, known as lipid I. This chain is Phospho-N-acetylmuramoyl-pentapeptide-transferase, found in Rhodococcus jostii (strain RHA1).